Consider the following 67-residue polypeptide: Beta-mammal toxin CeII9 (67 aa).

The region spanning 1-66 (KEGYLVNHST…VWPLPKKTCN (66 aa)) is the LCN-type CS-alpha/beta domain. Intrachain disulfides connect Cys12–Cys65, Cys16–Cys41, Cys25–Cys46, and Cys29–Cys48.

This sequence belongs to the long (4 C-C) scorpion toxin superfamily. Sodium channel inhibitor family. Beta subfamily. As to expression, expressed by the venom gland.

It is found in the secreted. Its function is as follows. Beta toxins bind at site-4 of sodium channels and shift the voltage of activation toward more negative potentials thereby affecting sodium channel activation and promoting spontaneous and repetitive firing. This toxin is active against mammals and lethal to mice. Selectively modulates Nav1.4/SCN4A, a sodium channel present in both denervated and innervated skeletal muscle. This chain is Beta-mammal toxin CeII9, found in Centruroides elegans (Bark scorpion).